The following is a 190-amino-acid chain: Small ribosomal subunit protein uS5 (190 aa).

Residues phenylalanine 21–valine 84 form the S5 DRBM domain. A disordered region spans residues lysine 156–alanine 190. Residues lysine 171–alanine 182 show a composition bias toward basic and acidic residues.

The protein belongs to the universal ribosomal protein uS5 family. In terms of assembly, part of the 30S ribosomal subunit. Contacts proteins S4 and S8.

Its function is as follows. With S4 and S12 plays an important role in translational accuracy. In terms of biological role, located at the back of the 30S subunit body where it stabilizes the conformation of the head with respect to the body. The protein is Small ribosomal subunit protein uS5 of Ruegeria pomeroyi (strain ATCC 700808 / DSM 15171 / DSS-3) (Silicibacter pomeroyi).